Here is a 497-residue protein sequence, read N- to C-terminus: Hexokinase-1 (497 aa).

The chain crosses the membrane as a helical span at residues Ala4–Val24. The 453-residue stretch at Ala35–Ala487 folds into the Hexokinase domain. The hexokinase small subdomain stretch occupies residues Thr90–Val228. Residues Gly104, Thr105, and Asn106 each contribute to the ADP site. Residues Thr194, Lys195, Asn229, and Asp230 each contribute to the D-glucose site. Positions Asn229–Asp476 are hexokinase large subdomain. Position 253 (Thr253) interacts with ADP. D-glucose-binding residues include Asn256, Glu284, and Glu315. Residue Gly441 participates in ADP binding.

This sequence belongs to the hexokinase family.

It localises to the plastid. The protein localises to the chloroplast outer membrane. The catalysed reaction is a D-hexose + ATP = a D-hexose 6-phosphate + ADP + H(+). It catalyses the reaction D-fructose + ATP = D-fructose 6-phosphate + ADP + H(+). It carries out the reaction D-glucose + ATP = D-glucose 6-phosphate + ADP + H(+). It participates in carbohydrate metabolism; hexose metabolism. Its pathway is carbohydrate degradation; glycolysis; D-glyceraldehyde 3-phosphate and glycerone phosphate from D-glucose: step 1/4. Fructose and glucose phosphorylating enzyme. This is Hexokinase-1 (HXK1) from Nicotiana tabacum (Common tobacco).